The chain runs to 374 residues: Probable neutral protease 2 homolog ARB_00849 (374 aa).

A signal peptide spans 1–19 (MKFLTALSAIGALVATATA). A propeptide spanning residues 20 to 189 (AAVPNTPAKQ…KKSRGTIDKR (170 aa)) is cleaved from the precursor. Cystine bridges form between Cys197–Cys268 and Cys275–Cys293. His318 is a binding site for Zn(2+). Glu319 is an active-site residue. The Zn(2+) site is built by His322 and Asp333.

The protein belongs to the peptidase M35 family. The cofactor is Zn(2+).

It localises to the secreted. The catalysed reaction is Preferential cleavage of bonds with hydrophobic residues in P1'. Also 3-Asn-|-Gln-4 and 8-Gly-|-Ser-9 bonds in insulin B chain.. Probable secreted metalloprotease that shows high activities on basic nuclear substrates such as histone and protamine. May be involved in virulence. This is Probable neutral protease 2 homolog ARB_00849 from Arthroderma benhamiae (strain ATCC MYA-4681 / CBS 112371) (Trichophyton mentagrophytes).